A 441-amino-acid chain; its full sequence is tRNA(Ile)-lysidine synthase (441 aa).

28–33 (SGGTDS) lines the ATP pocket.

It belongs to the tRNA(Ile)-lysidine synthase family.

It is found in the cytoplasm. It catalyses the reaction cytidine(34) in tRNA(Ile2) + L-lysine + ATP = lysidine(34) in tRNA(Ile2) + AMP + diphosphate + H(+). In terms of biological role, ligates lysine onto the cytidine present at position 34 of the AUA codon-specific tRNA(Ile) that contains the anticodon CAU, in an ATP-dependent manner. Cytidine is converted to lysidine, thus changing the amino acid specificity of the tRNA from methionine to isoleucine. This chain is tRNA(Ile)-lysidine synthase, found in Orientia tsutsugamushi (strain Boryong) (Rickettsia tsutsugamushi).